The chain runs to 178 residues: Large ribosomal subunit protein uL6 (178 aa).

The protein belongs to the universal ribosomal protein uL6 family. In terms of assembly, part of the 50S ribosomal subunit.

Functionally, this protein binds to the 23S rRNA, and is important in its secondary structure. It is located near the subunit interface in the base of the L7/L12 stalk, and near the tRNA binding site of the peptidyltransferase center. The polypeptide is Large ribosomal subunit protein uL6 (Helicobacter pylori (strain HPAG1)).